Consider the following 98-residue polypeptide: Citrate lyase acyl carrier protein (98 aa).

Serine 14 is subject to O-(phosphoribosyl dephospho-coenzyme A)serine.

The protein belongs to the CitD family. As to quaternary structure, oligomer with a subunit composition of (alpha,beta,gamma)6.

The protein resides in the cytoplasm. Covalent carrier of the coenzyme of citrate lyase. This chain is Citrate lyase acyl carrier protein, found in Salmonella arizonae (strain ATCC BAA-731 / CDC346-86 / RSK2980).